We begin with the raw amino-acid sequence, 312 residues long: Porphobilinogen deaminase (312 aa).

S-(dipyrrolylmethanemethyl)cysteine is present on Cys-241.

This sequence belongs to the HMBS family. As to quaternary structure, monomer. The cofactor is dipyrromethane.

It carries out the reaction 4 porphobilinogen + H2O = hydroxymethylbilane + 4 NH4(+). Its pathway is porphyrin-containing compound metabolism; protoporphyrin-IX biosynthesis; coproporphyrinogen-III from 5-aminolevulinate: step 2/4. It functions in the pathway porphyrin-containing compound metabolism; chlorophyll biosynthesis. Functionally, tetrapolymerization of the monopyrrole PBG into the hydroxymethylbilane pre-uroporphyrinogen in several discrete steps. The sequence is that of Porphobilinogen deaminase (hemC) from Chlorobaculum parvum (strain DSM 263 / NCIMB 8327) (Chlorobium vibrioforme subsp. thiosulfatophilum).